The following is a 72-amino-acid chain: MATKDTGGGQQKATRNTEEVEEQAQDAQASEDLKERQEKLSDDVDSVLDEIDDVLEENAEDFVRSFVQKGGE.

A compositionally biased stretch (gly residues) spans 1 to 10; it reads MATKDTGGGQ. Residues 1 to 45 form a disordered region; sequence MATKDTGGGQQKATRNTEEVEEQAQDAQASEDLKERQEKLSDDVD. A coiled-coil region spans residues 9 to 60; the sequence is GQQKATRNTEEVEEQAQDAQASEDLKERQEKLSDDVDSVLDEIDDVLEENAE. Residues 28 to 66 are ARC ATPase binding; it reads QASEDLKERQEKLSDDVDSVLDEIDDVLEENAEDFVRSF. Residues 31-42 are compositionally biased toward basic and acidic residues; the sequence is EDLKERQEKLSD. E72 is covalently cross-linked (Isoglutamyl lysine isopeptide (Glu-Lys) (interchain with K-? in acceptor proteins)).

Belongs to the prokaryotic ubiquitin-like protein family. Strongly interacts with the proteasome-associated ATPase ARC through a hydrophobic interface; the interacting region of Pup lies in its C-terminal half. There is one Pup binding site per ARC hexamer ring.

Its pathway is protein degradation; proteasomal Pup-dependent pathway. Protein modifier that is covalently attached to lysine residues of substrate proteins, thereby targeting them for proteasomal degradation. The tagging system is termed pupylation. In Streptomyces avermitilis (strain ATCC 31267 / DSM 46492 / JCM 5070 / NBRC 14893 / NCIMB 12804 / NRRL 8165 / MA-4680), this protein is Prokaryotic ubiquitin-like protein Pup.